The chain runs to 262 residues: Acyl-[acyl-carrier-protein]--UDP-N-acetylglucosamine O-acyltransferase (262 aa).

It belongs to the transferase hexapeptide repeat family. LpxA subfamily. As to quaternary structure, homotrimer.

The protein resides in the cytoplasm. The enzyme catalyses a (3R)-hydroxyacyl-[ACP] + UDP-N-acetyl-alpha-D-glucosamine = a UDP-3-O-[(3R)-3-hydroxyacyl]-N-acetyl-alpha-D-glucosamine + holo-[ACP]. Its pathway is glycolipid biosynthesis; lipid IV(A) biosynthesis; lipid IV(A) from (3R)-3-hydroxytetradecanoyl-[acyl-carrier-protein] and UDP-N-acetyl-alpha-D-glucosamine: step 1/6. Functionally, involved in the biosynthesis of lipid A, a phosphorylated glycolipid that anchors the lipopolysaccharide to the outer membrane of the cell. This chain is Acyl-[acyl-carrier-protein]--UDP-N-acetylglucosamine O-acyltransferase, found in Burkholderia vietnamiensis (strain G4 / LMG 22486) (Burkholderia cepacia (strain R1808)).